We begin with the raw amino-acid sequence, 389 residues long: MKFVDEAVIKVQAGDGGNGVVSFWREKFVTKGGPDGGDGGDGGDVYIQADENLNTLIDYRFQRFYEAERGQNGSGGNCTGKRGKDITLRVPVGTRAVDIHTNEIVAEVAEHGKKVMVAKGGWHGLGNTRFKSSVNRAPRQKTMGTKGEIRELRLELLLLADVGMLGLPNAGKSTFIRAVFAAKPKVADYPFTTLIPSLGVVSVVPEKSFVVADIPGLIEGAADGAGLGIRFLKHLERCRVLLHMIDIFPIDQSDPVQNALTIIDELEQYSEKLANKPRWLVFNKVDLVSEEQADEIIQEVIDALGWEEQYFKISAVNRQGTKELCYKLADFMEQLPREEQEVSEEEKVNFMWDYHPDANQGEVITEDDDDDWDDWDDEEDDGHVIYVRE.

Residues 1–159 (MKFVDEAVIK…RELRLELLLL (159 aa)) enclose the Obg domain. Residues 160 to 333 (ADVGMLGLPN…LCYKLADFME (174 aa)) form the OBG-type G domain. GTP contacts are provided by residues 166–173 (GLPNAGKS), 191–195 (FTTLI), 213–216 (DIPG), 283–286 (NKVD), and 314–316 (SAV). Mg(2+) contacts are provided by Ser-173 and Thr-193. The tract at residues 359 to 389 (NQGEVITEDDDDDWDDWDDEEDDGHVIYVRE) is disordered. The span at 364-381 (ITEDDDDDWDDWDDEEDD) shows a compositional bias: acidic residues.

The protein belongs to the TRAFAC class OBG-HflX-like GTPase superfamily. OBG GTPase family. In terms of assembly, monomer. It depends on Mg(2+) as a cofactor.

Its subcellular location is the cytoplasm. In terms of biological role, an essential GTPase which binds GTP, GDP and possibly (p)ppGpp with moderate affinity, with high nucleotide exchange rates and a fairly low GTP hydrolysis rate. Plays a role in control of the cell cycle, stress response, ribosome biogenesis and in those bacteria that undergo differentiation, in morphogenesis control. This is GTPase Obg from Vibrio vulnificus (strain CMCP6).